We begin with the raw amino-acid sequence, 288 residues long: Lysosomal thioesterase PPT2 homolog (288 aa).

A signal peptide spans 1-22; sequence MRLRLQVLVALLTCSSISVSLA. The active-site Nucleophile is Ser98. N-linked (GlcNAc...) asparagine glycosylation occurs at Asn192. Residues Asp214 and His269 contribute to the active site.

It belongs to the palmitoyl-protein thioesterase family. Expressed in adult head and crop.

The protein localises to the lysosome. The enzyme catalyses hexadecanoyl-CoA + H2O = hexadecanoate + CoA + H(+). It catalyses the reaction S-hexadecanoyl-N-acetylcysteamine + H2O = N-acetylcysteamine + hexadecanoate + H(+). In terms of biological role, catalyzes the cleavage of thioester bonds from S-palmitoyl-CoA or S-palmitoyl-N-acetylcysteamine (unbranched structures) but does not have activity against palmitoylcysteine or palmitoylated proteins, branched structures or bulky head groups. Conversely, hydrolyzes both long and short chain fatty acyl-CoA substrate. This is Lysosomal thioesterase PPT2 homolog (Ppt2) from Drosophila melanogaster (Fruit fly).